The chain runs to 706 residues: MARTTPLERVRNIGIAAHIDAGKTTTTERILFYSGVVHKIGEVHEGNTVTDWMVQERERGITITAAAITTAWTKRDPQNPTQPMPGALEHKINIIDTPGHVDFTIEVERSMRVLDGVIAVFCSVGGVQPQSETVWRQANRYSVPRIVFVNKMDRTGANFYRVYDQIRDRLRANAVPIQLPIGAEDTLRGLIDLVRMRAYLYKNDIGTDIEETEIPADMQEQADEFRTKLVEAVAEADDVLMEKYLEGEDLTEEEIRAGLRQGTIAGTIVPMLCGSAFKNKGVQLLLDAVIDYLPAPTEVPAIQGTLPDGTEVERKADDAQPLAGLAFKIMSDPYGRLTFVRVYSGILKKGSYVLNSTKGKKERISRLIVLKADDRIEVDELRAGDLGAALGLKDTFTGDTLCDDSAPVILESLFIPEPVISVAVEPKTKQDMEKLSKALQSLSEEDPTFRVSVDPETNQTVIAGMGELHLEILVDRMLREFNVGANVGAPQVAYRETVRKPVRTEGKFIRQSGGKGQYGHVVIELEPGDPGSGFEFVSKIVGGVVPKEYIGPAEQGMKEACESGILAGYPVIDLKVTMVDGSFHEVDSSEMAFKIAGSMAIKDAVMKANPVLLEPMMKVEVEVPEDFLGSVMGDLISRRGQIEGQTATEGIAKVTAKVPLERMFGYATDIRSNTQGRGIFSMEFSHYEEVPRNVAEAIIAKNKGNA.

Residues 8–297 (ERVRNIGIAA…AVIDYLPAPT (290 aa)) enclose the tr-type G domain. Residues 17-24 (AHIDAGKT), 96-100 (DTPGH), and 150-153 (NKMD) each bind GTP.

The protein belongs to the TRAFAC class translation factor GTPase superfamily. Classic translation factor GTPase family. EF-G/EF-2 subfamily.

The protein localises to the cytoplasm. Catalyzes the GTP-dependent ribosomal translocation step during translation elongation. During this step, the ribosome changes from the pre-translocational (PRE) to the post-translocational (POST) state as the newly formed A-site-bound peptidyl-tRNA and P-site-bound deacylated tRNA move to the P and E sites, respectively. Catalyzes the coordinated movement of the two tRNA molecules, the mRNA and conformational changes in the ribosome. In Cyanothece sp. (strain PCC 7425 / ATCC 29141), this protein is Elongation factor G.